The primary structure comprises 948 residues: Sensor histidine kinase RcsC (948 aa).

Over 1–20 (MKYLASFRTTLKVSRYLFRA) the chain is Cytoplasmic. A helical membrane pass occupies residues 21-41 (LALLIWLLIAFVSVFYIVNAL). Over 42–313 (HQRESEIRQE…PVDLVLERIR (272 aa)) the chain is Periplasmic. Residues 314-334 (ILILNAILLNVLVGAGLFTLA) traverse the membrane as a helical segment. The Cytoplasmic portion of the chain corresponds to 335-948 (RMYERRIFIP…YAERVRKTRA (614 aa)). Positions 357–425 (QFNRKIVASA…VLTSNNTNLQ (69 aa)) constitute a PAS domain. The 217-residue stretch at 476–692 (TVSHELRTPL…QFTLRIPLYG (217 aa)) folds into the Histidine kinase domain. A Phosphohistidine; by autocatalysis modification is found at histidine 479. Residues 705–805 (AGTCCWLAVR…ARIYSIELDS (101 aa)) enclose the ABL domain. The Response regulatory domain occupies 826 to 940 (MILVVDDHPI…ALKQTLAVYA (115 aa)). A 4-aspartylphosphate modification is found at aspartate 875.

This sequence belongs to the RcsC family. Interacts with RcsD. In terms of processing, autophosphorylated. Activation probably requires a transfer of a phosphate group from a His in the transmitter domain to an Asp in the receiver domain.

It localises to the cell inner membrane. It carries out the reaction ATP + protein L-histidine = ADP + protein N-phospho-L-histidine.. Functionally, component of the Rcs signaling system, which controls transcription of numerous genes. RcsC functions as a membrane-associated protein kinase that phosphorylates RcsD in response to environmental signals. The phosphoryl group is then transferred to the response regulator RcsB. In Salmonella typhi, this protein is Sensor histidine kinase RcsC.